Consider the following 209-residue polypeptide: 3-demethoxyubiquinol 3-hydroxylase (209 aa).

E58, E88, H91, E140, E172, and H175 together coordinate Fe cation.

The protein belongs to the COQ7 family. It depends on Fe cation as a cofactor.

Its subcellular location is the cell membrane. It carries out the reaction a 5-methoxy-2-methyl-3-(all-trans-polyprenyl)benzene-1,4-diol + AH2 + O2 = a 3-demethylubiquinol + A + H2O. The protein operates within cofactor biosynthesis; ubiquinone biosynthesis. Functionally, catalyzes the hydroxylation of 2-nonaprenyl-3-methyl-6-methoxy-1,4-benzoquinol during ubiquinone biosynthesis. In Polynucleobacter necessarius subsp. necessarius (strain STIR1), this protein is 3-demethoxyubiquinol 3-hydroxylase.